The sequence spans 116 residues: Ribosome-binding factor A (116 aa).

It belongs to the RbfA family. Monomer. Binds 30S ribosomal subunits, but not 50S ribosomal subunits or 70S ribosomes.

It localises to the cytoplasm. In terms of biological role, one of several proteins that assist in the late maturation steps of the functional core of the 30S ribosomal subunit. Associates with free 30S ribosomal subunits (but not with 30S subunits that are part of 70S ribosomes or polysomes). Required for efficient processing of 16S rRNA. May interact with the 5'-terminal helix region of 16S rRNA. The protein is Ribosome-binding factor A of Streptococcus pyogenes serotype M3 (strain SSI-1).